The chain runs to 159 residues: NADH-quinone oxidoreductase subunit I (159 aa).

4Fe-4S ferredoxin-type domains lie at 50–80 (QRRY…IESE) and 90–119 (KRYD…ETHI). [4Fe-4S] cluster is bound by residues Cys-60, Cys-63, Cys-66, Cys-70, Cys-99, Cys-102, Cys-105, and Cys-109.

It belongs to the complex I 23 kDa subunit family. In terms of assembly, NDH-1 is composed of 14 different subunits. Subunits NuoA, H, J, K, L, M, N constitute the membrane sector of the complex. [4Fe-4S] cluster serves as cofactor.

Its subcellular location is the cell inner membrane. It carries out the reaction a quinone + NADH + 5 H(+)(in) = a quinol + NAD(+) + 4 H(+)(out). Its function is as follows. NDH-1 shuttles electrons from NADH, via FMN and iron-sulfur (Fe-S) centers, to quinones in the respiratory chain. The immediate electron acceptor for the enzyme in this species is believed to be ubiquinone. Couples the redox reaction to proton translocation (for every two electrons transferred, four hydrogen ions are translocated across the cytoplasmic membrane), and thus conserves the redox energy in a proton gradient. This is NADH-quinone oxidoreductase subunit I from Neisseria meningitidis serogroup A / serotype 4A (strain DSM 15465 / Z2491).